The sequence spans 283 residues: Thymidylate synthase (283 aa).

Residue arginine 22 coordinates dUMP. The active-site Nucleophile is cysteine 160. DUMP is bound by residues 180–183 (RSAD), asparagine 191, and 221–223 (HIY). Aspartate 183 is a binding site for (6R)-5,10-methylene-5,6,7,8-tetrahydrofolate. Serine 282 is a (6R)-5,10-methylene-5,6,7,8-tetrahydrofolate binding site.

Belongs to the thymidylate synthase family. Bacterial-type ThyA subfamily. Homodimer.

The protein localises to the cytoplasm. The enzyme catalyses dUMP + (6R)-5,10-methylene-5,6,7,8-tetrahydrofolate = 7,8-dihydrofolate + dTMP. It functions in the pathway pyrimidine metabolism; dTTP biosynthesis. In terms of biological role, catalyzes the reductive methylation of 2'-deoxyuridine-5'-monophosphate (dUMP) to 2'-deoxythymidine-5'-monophosphate (dTMP) while utilizing 5,10-methylenetetrahydrofolate (mTHF) as the methyl donor and reductant in the reaction, yielding dihydrofolate (DHF) as a by-product. This enzymatic reaction provides an intracellular de novo source of dTMP, an essential precursor for DNA biosynthesis. The sequence is that of Thymidylate synthase from Glaesserella parasuis serovar 5 (strain SH0165) (Haemophilus parasuis).